An 86-amino-acid chain; its full sequence is Small ribosomal subunit protein uS15 (86 aa).

Residues 1 to 22 (MSVDTQKVIEDNKRSAQDTGSP) form a disordered region. Residues 7-16 (KVIEDNKRSA) are compositionally biased toward basic and acidic residues.

It belongs to the universal ribosomal protein uS15 family. In terms of assembly, part of the 30S ribosomal subunit. Forms a bridge to the 50S subunit in the 70S ribosome, contacting the 23S rRNA.

In terms of biological role, one of the primary rRNA binding proteins, it binds directly to 16S rRNA where it helps nucleate assembly of the platform of the 30S subunit by binding and bridging several RNA helices of the 16S rRNA. Its function is as follows. Forms an intersubunit bridge (bridge B4) with the 23S rRNA of the 50S subunit in the ribosome. The protein is Small ribosomal subunit protein uS15 of Xanthomonas campestris pv. campestris (strain 8004).